A 220-amino-acid chain; its full sequence is Phosphatidylserine decarboxylase proenzyme (220 aa).

Residue Ser-188 is the Schiff-base intermediate with substrate; via pyruvic acid of the active site. At Ser-188 the chain carries Pyruvic acid (Ser); by autocatalysis.

This sequence belongs to the phosphatidylserine decarboxylase family. PSD-A subfamily. In terms of assembly, heterodimer of a large membrane-associated beta subunit and a small pyruvoyl-containing alpha subunit. Pyruvate serves as cofactor. In terms of processing, is synthesized initially as an inactive proenzyme. Formation of the active enzyme involves a self-maturation process in which the active site pyruvoyl group is generated from an internal serine residue via an autocatalytic post-translational modification. Two non-identical subunits are generated from the proenzyme in this reaction, and the pyruvate is formed at the N-terminus of the alpha chain, which is derived from the carboxyl end of the proenzyme. The post-translation cleavage follows an unusual pathway, termed non-hydrolytic serinolysis, in which the side chain hydroxyl group of the serine supplies its oxygen atom to form the C-terminus of the beta chain, while the remainder of the serine residue undergoes an oxidative deamination to produce ammonia and the pyruvoyl prosthetic group on the alpha chain.

The protein resides in the cell membrane. It catalyses the reaction a 1,2-diacyl-sn-glycero-3-phospho-L-serine + H(+) = a 1,2-diacyl-sn-glycero-3-phosphoethanolamine + CO2. Its pathway is phospholipid metabolism; phosphatidylethanolamine biosynthesis; phosphatidylethanolamine from CDP-diacylglycerol: step 2/2. Functionally, catalyzes the formation of phosphatidylethanolamine (PtdEtn) from phosphatidylserine (PtdSer). This is Phosphatidylserine decarboxylase proenzyme from Cytophaga hutchinsonii (strain ATCC 33406 / DSM 1761 / CIP 103989 / NBRC 15051 / NCIMB 9469 / D465).